Consider the following 457-residue polypeptide: Cysteine--tRNA ligase (457 aa).

Zn(2+) is bound at residue cysteine 27. The short motif at 29-39 (ITPQSEPHIGH) is the 'HIGH' region element. 3 residues coordinate Zn(2+): cysteine 207, histidine 232, and glutamate 236. Positions 265 to 269 (KMSKS) match the 'KMSKS' region motif. An ATP-binding site is contributed by lysine 268.

This sequence belongs to the class-I aminoacyl-tRNA synthetase family. In terms of assembly, monomer. Zn(2+) serves as cofactor.

The protein resides in the cytoplasm. The catalysed reaction is tRNA(Cys) + L-cysteine + ATP = L-cysteinyl-tRNA(Cys) + AMP + diphosphate. This Dehalococcoides mccartyi (strain ATCC BAA-2100 / JCM 16839 / KCTC 5957 / BAV1) protein is Cysteine--tRNA ligase.